A 315-amino-acid chain; its full sequence is WD repeat domain-containing protein 83 (315 aa).

WD repeat units follow at residues 23-62 (CGQGAVRAVRFNVDGNYCLTCGSDKTLKLWNPLRGTLLRT), 65-104 (GHGYEVLDAAGSFDNSHLCSGGGDKTVVLWDVATGQVVRK), 107-146 (GHAGKVNTVQFNEEATVILSGSIDSSVRCWDCRSRKPEPV), 151-188 (EARDGISSVKVSDHEILAGSVDGRVRRYDLRMGQVTSD), 190-228 (VGSPITCTCFSRDGQCTLISSLDSTLRLLDKDTGELLGE), 231-272 (GHKN…LALA), and 275-313 (VGSNVVQSLAYHPADPCLLTAMGGSIQYWREETYEAEGG).

It belongs to the WD repeat MORG1 family. Interacts with EGLN3/PHD3. Interacts with ERK signaling proteins MAP2K1/MEK1, MAP2K2/MEK2, LAMTOR3, ARAF/Raf-1, MAPK1/ERK2 and MAPK3/ERK1. Identified in the spliceosome C complex. Interacts with PARD6B and CRB3. Interacts strongly with GTP-bound RRAGA but not with inactive GDP-bound. Interacts with p62/SQSTM1. As to expression, highly expressed in testis and brain. Expressed at intermediate level in heart, liver and kidney. Weakly expressed in spleen and lung and absent in muscle.

Its subcellular location is the cytoplasm. It localises to the lysosome. It is found in the nucleus. Functionally, molecular scaffold protein for various multimeric protein complexes. Acts as a module in the assembly of a multicomponent scaffold for the ERK pathway, linking ERK responses to specific agonists. At low concentrations it enhances ERK activation, whereas high concentrations lead to the inhibition of ERK activation. Also involved in response to hypoxia by acting as a negative regulator of HIF1A/HIF-1-alpha via its interaction with EGLN3/PHD3. May promote degradation of HIF1A. May act by recruiting signaling complexes to a specific upstream activator. May also be involved in pre-mRNA splicing. Participates in tight junction development by regulating apico-basal polarity, a key step in tissue development and organization. Mechanistically, regulates the translocation of PAR6-aPKC from the cytoplasm to the apical surface by acting as an adapter between PARD6B AND CRB3. Also acts as a negative regulator of mTORC1 under nutrient-rich conditions by binding to the active Rag GTPases to inhibit mTORC1 localization to the lysosome and phosphorylation of downstream targets. This facilitates constitutive basal autophagy during nutrient availability. The sequence is that of WD repeat domain-containing protein 83 (Wdr83) from Rattus norvegicus (Rat).